Reading from the N-terminus, the 459-residue chain is tRNA modification GTPase MnmE (459 aa).

(6S)-5-formyl-5,6,7,8-tetrahydrofolate contacts are provided by arginine 23, glutamate 88, and arginine 127. Residues 223-381 (GLDVVIVGKP…LKEYIKDLFF (159 aa)) form the TrmE-type G domain. Asparagine 233 contacts K(+). GTP-binding positions include 233–238 (NVGKSS), 252–258 (TEIPGTT), and 277–280 (DTAG). Serine 237 is a Mg(2+) binding site. The K(+) site is built by threonine 252, isoleucine 254, and threonine 257. Threonine 258 provides a ligand contact to Mg(2+). Lysine 459 is a (6S)-5-formyl-5,6,7,8-tetrahydrofolate binding site.

Belongs to the TRAFAC class TrmE-Era-EngA-EngB-Septin-like GTPase superfamily. TrmE GTPase family. Homodimer. Heterotetramer of two MnmE and two MnmG subunits. The cofactor is K(+).

The protein resides in the cytoplasm. In terms of biological role, exhibits a very high intrinsic GTPase hydrolysis rate. Involved in the addition of a carboxymethylaminomethyl (cmnm) group at the wobble position (U34) of certain tRNAs, forming tRNA-cmnm(5)s(2)U34. In Clostridium tetani (strain Massachusetts / E88), this protein is tRNA modification GTPase MnmE.